We begin with the raw amino-acid sequence, 337 residues long: MSSLSPASEVILRHLDHFADRHVLIAGDLQDTLASQIQAKSVRAYTNQYHQWLPLLKSMGDNAFFGLAADQSFVKYCDTLIYFWPKNKNEATFQLRSLCASLSVGTEIFIVGENRSGVKSATELMNGIAKLKKIDSARRCSLFFGSLTYQTLFDRNNWWQTYRYDDLTVMALPGVFSQTALDEGSRLLLSTFDDAMVGDLLDMACGCGVIATVLGKKNPMLKLTLCDVNAAAISSSIATLNVNELEGRVIASNVYSAVEETYDWIVSNPPFHDGLGTSYQAAEDIIRLAPNFLKKGGKLRIVANAFLPYQDILDHVFGSHEVLASTGKFKVYQATKK.

It belongs to the methyltransferase superfamily. RsmC family. Monomer.

It is found in the cytoplasm. It catalyses the reaction guanosine(1207) in 16S rRNA + S-adenosyl-L-methionine = N(2)-methylguanosine(1207) in 16S rRNA + S-adenosyl-L-homocysteine + H(+). Functionally, specifically methylates the guanine in position 1207 of 16S rRNA in the 30S particle. The sequence is that of Ribosomal RNA small subunit methyltransferase C from Proteus mirabilis (strain HI4320).